Reading from the N-terminus, the 1854-residue chain is PKS-NRPS hybrid synthetase ATPKS (1854 aa).

Positions 24–423 (FDQTQTRYSP…GRADTQIKIR (400 aa)) are adenylation (A) domain. The Carrier 1 domain maps to 523-598 (IPASTLTQQL…NLAAYLSDQT (76 aa)). Ser558 carries the O-(pantetheine 4'-phosphoryl)serine modification. Residues 617-1049 (GEDIAVISMA…GTNAHAIIEE (433 aa)) form the Ketosynthase family 3 (KS3) domain. Active-site for beta-ketoacyl synthase activity residues include Cys791, His926, and His967. The interval 1162–1496 (LFSGQGTERA…SLSDLHIRKV (335 aa)) is malonyl-CoA:ACP transacylase (MAT) domain. The tract at residues 1536-1556 (KSSGQPSGQSPSGCPQPTGQI) is disordered. Over residues 1537-1555 (SSGQPSGQSPSGCPQPTGQ) the composition is skewed to low complexity. The 76-residue stretch at 1776–1851 (MMLQGLVRGI…SLSDALQKQV (76 aa)) folds into the Carrier 2 domain. The residue at position 1811 (Ser1811) is an O-(pantetheine 4'-phosphoryl)serine.

In the C-terminal section; belongs to the NRP synthetase family.

Its pathway is secondary metabolite biosynthesis. PKS-NRPS hybrid synthetase; part of the gene cluster that mediates the biosynthesis of pyrophen and campyrone B, which represent a class of fungal amino acid-derived alpha-pyrone natural products. The first step of pyrophen biosynthesis is catalyzed by the PKS-NRPS hybrid synthetase ATPKS that uptakes and condensates L-phenylalanine and malonyl-CoA in order to produce desmethyldesacetylpyrophen. Although the A domain does not discriminate between 2 enantiomeric phenylalanines, the downstream KS domain must play a gate keeping role to stereoselectively accept the L-phenylalanyl-S-phosphopantetheine (Ppant)-T domain intermediate for chain elongation. The resulting amino acid derived diketide is off-loaded through lactonization to yield the alpha-pyrone intermediate desmethyldesacetylpyrophen. The cluster-specific O-methyltransferase (OMT) then methylates desmethyldesacetylpyrophen to desacetylpyrophen, which is further acetylated to pyrophen by an endogenous yet unidentified N-acetyltransferase. ATPKS has relaxed substrate specificity to activate and extend branched-chain amino acid L-leucine to produce small amounts of campyrone B. The protein is PKS-NRPS hybrid synthetase ATPKS of Aspergillus niger (strain ATCC 1015 / CBS 113.46 / FGSC A1144 / LSHB Ac4 / NCTC 3858a / NRRL 328 / USDA 3528.7).